A 223-amino-acid chain; its full sequence is Glutathione S-transferase A1 (223 aa).

M1 carries the N-acetylmethionine modification. At A2 the chain carries N-acetylalanine; in Glutathione S-transferase A1, N-terminally processed. The 81-residue stretch at 3–83 (GKPVLHYFNA…YIATKYDLYG (81 aa)) folds into the GST N-terminal domain. K4 carries the post-translational modification N6-succinyllysine. Residues Y9, K45, 54–55 (QV), and 67–68 (QT) each bind glutathione. The region spanning 85 to 208 (DMKERALIDM…QPGSQRKPPM (124 aa)) is the GST C-terminal domain.

Belongs to the GST superfamily. Alpha family. As to quaternary structure, homodimer. Expressed in the liver, skin and kidney.

It catalyses the reaction RX + glutathione = an S-substituted glutathione + a halide anion + H(+). The catalysed reaction is prostaglandin A2 + glutathione = prostaglandin A2-S-(R)-glutathione. It carries out the reaction prostaglandin J2 + glutathione = prostaglandin J2-S-(R)-glutathione. The enzyme catalyses (13S)-hydroperoxy-(9Z,11E)-octadecadienoate + 2 glutathione = (13S)-hydroxy-(9Z,11E)-octadecadienoate + glutathione disulfide + H2O. It catalyses the reaction androst-5-ene-3,17-dione = androst-4-ene-3,17-dione. Its function is as follows. Glutathione S-transferase that catalyzes the nucleophilic attack of the sulfur atom of glutathione on the electrophilic groups of a wide range of exogenous and endogenous compounds. Involved in the formation of glutathione conjugates of both prostaglandin A2 (PGA2) and prostaglandin J2 (PGJ2). It also catalyzes the isomerization of D5-androstene-3,17-dione (AD) into D4-androstene-3,17-dione and may therefore play an important role in hormone biosynthesis. Through its glutathione-dependent peroxidase activity toward the fatty acid hydroperoxide (13S)-hydroperoxy-(9Z,11E)-octadecadienoate/13-HPODE it is also involved in the metabolism of oxidized linoleic acid. In Mus musculus (Mouse), this protein is Glutathione S-transferase A1 (Gsta1).